The primary structure comprises 508 residues: GMP synthase [glutamine-hydrolyzing] (508 aa).

The region spanning 1 to 189 is the Glutamine amidotransferase type-1 domain; sequence MILVLDFGSQ…ALLVCGCEKT (189 aa). Cys78 (nucleophile) is an active-site residue. Active-site residues include His163 and Glu165. Residues 190 to 383 enclose the GMPS ATP-PPase domain; sequence WGMQHFAQRE…LGVSQDFLMR (194 aa). 217–223 is a binding site for ATP; that stretch reads SGGVDST.

As to quaternary structure, homodimer.

It catalyses the reaction XMP + L-glutamine + ATP + H2O = GMP + L-glutamate + AMP + diphosphate + 2 H(+). The protein operates within purine metabolism; GMP biosynthesis; GMP from XMP (L-Gln route): step 1/1. Its function is as follows. Catalyzes the synthesis of GMP from XMP. In Helicobacter pylori (strain J99 / ATCC 700824) (Campylobacter pylori J99), this protein is GMP synthase [glutamine-hydrolyzing] (guaA).